Reading from the N-terminus, the 255-residue chain is Segregation and condensation protein A (255 aa).

Belongs to the ScpA family. Component of a cohesin-like complex composed of ScpA, ScpB and the Smc homodimer, in which ScpA and ScpB bind to the head domain of Smc. The presence of the three proteins is required for the association of the complex with DNA.

It localises to the cytoplasm. In terms of biological role, participates in chromosomal partition during cell division. May act via the formation of a condensin-like complex containing Smc and ScpB that pull DNA away from mid-cell into both cell halves. The protein is Segregation and condensation protein A of Lactiplantibacillus plantarum (strain ATCC BAA-793 / NCIMB 8826 / WCFS1) (Lactobacillus plantarum).